A 146-amino-acid polypeptide reads, in one-letter code: Large ribosomal subunit protein uL13 (146 aa).

The protein belongs to the universal ribosomal protein uL13 family. Part of the 50S ribosomal subunit.

In terms of biological role, this protein is one of the early assembly proteins of the 50S ribosomal subunit, although it is not seen to bind rRNA by itself. It is important during the early stages of 50S assembly. The protein is Large ribosomal subunit protein uL13 of Mycoplasma pneumoniae (strain ATCC 29342 / M129 / Subtype 1) (Mycoplasmoides pneumoniae).